Here is a 203-residue protein sequence, read N- to C-terminus: Holliday junction branch migration complex subunit RuvA (203 aa).

Positions 1–63 (MIAFVSGPVA…EDSLTLYGFV (63 aa)) are domain I. The interval 64–141 (DDDERQVFEL…GEPLGTGGPA (78 aa)) is domain II. A flexible linker region spans residues 141 to 145 (AIGRA). Residues 146-203 (VTTGWREQLHAALIGLGYATREADEAVAAVAPQAEAAGGTPQVGQLLKAALQTLNRTR) form a domain III region.

Belongs to the RuvA family. In terms of assembly, homotetramer. Forms an RuvA(8)-RuvB(12)-Holliday junction (HJ) complex. HJ DNA is sandwiched between 2 RuvA tetramers; dsDNA enters through RuvA and exits via RuvB. An RuvB hexamer assembles on each DNA strand where it exits the tetramer. Each RuvB hexamer is contacted by two RuvA subunits (via domain III) on 2 adjacent RuvB subunits; this complex drives branch migration. In the full resolvosome a probable DNA-RuvA(4)-RuvB(12)-RuvC(2) complex forms which resolves the HJ.

Its subcellular location is the cytoplasm. The RuvA-RuvB-RuvC complex processes Holliday junction (HJ) DNA during genetic recombination and DNA repair, while the RuvA-RuvB complex plays an important role in the rescue of blocked DNA replication forks via replication fork reversal (RFR). RuvA specifically binds to HJ cruciform DNA, conferring on it an open structure. The RuvB hexamer acts as an ATP-dependent pump, pulling dsDNA into and through the RuvAB complex. HJ branch migration allows RuvC to scan DNA until it finds its consensus sequence, where it cleaves and resolves the cruciform DNA. The sequence is that of Holliday junction branch migration complex subunit RuvA from Streptomyces avermitilis (strain ATCC 31267 / DSM 46492 / JCM 5070 / NBRC 14893 / NCIMB 12804 / NRRL 8165 / MA-4680).